The primary structure comprises 991 residues: UPF0182 protein RHA1_ro08670 (991 aa).

The next 7 membrane-spanning stretches (helical) occupy residues 16–36 (VMIM…RLVV), 61–81 (LILF…AVVW), 115–135 (FTVG…QASW), 170–190 (LILA…LGTH), 214–234 (VQLA…YWLD), 263–283 (RLIM…AIAV), and 291–311 (MATA…PALI). Residues 902 to 940 (TGAVATAPGGDATTPPPTGGQPPAPPPPGAPPAPPPATS) are disordered. A compositionally biased stretch (low complexity) spans 903–914 (GAVATAPGGDAT). The span at 915–938 (TPPPTGGQPPAPPPPGAPPAPPPA) shows a compositional bias: pro residues.

This sequence belongs to the UPF0182 family.

The protein resides in the cell membrane. This chain is UPF0182 protein RHA1_ro08670, found in Rhodococcus jostii (strain RHA1).